A 339-amino-acid polypeptide reads, in one-letter code: Serpentine receptor class alpha-24 (339 aa).

7 helical membrane passes run 26–46 (ITVKMSSVLVVTVILLSYYFA), 65–82 (LILLVCLLNSIIHQTTML), 112–132 (ELFVYYLTTYFSTYSVFSLAF), 151–171 (VSIFLLFIQLIFTLGTYYVGL), 199–219 (FRTLIMGICIIVTVFVYYLSV), 248–268 (VCILIVLQFACILISSLGVNY), and 284–304 (LAPFFVGVTYANLCLPLVIHC).

This sequence belongs to the nematode receptor-like protein sra family.

The protein resides in the membrane. The chain is Serpentine receptor class alpha-24 (sra-24) from Caenorhabditis elegans.